Reading from the N-terminus, the 214-residue chain is Orotate phosphoribosyltransferase (214 aa).

Lys26 provides a ligand contact to 5-phospho-alpha-D-ribose 1-diphosphate. 34–35 is an orotate binding site; sequence FF. Residues 72 to 73, Arg98, Lys99, Lys102, His104, and 123 to 131 each bind 5-phospho-alpha-D-ribose 1-diphosphate; these read YK and DDVISAGTS. Positions 127 and 155 each coordinate orotate.

It belongs to the purine/pyrimidine phosphoribosyltransferase family. PyrE subfamily. In terms of assembly, homodimer. The cofactor is Mg(2+).

The enzyme catalyses orotidine 5'-phosphate + diphosphate = orotate + 5-phospho-alpha-D-ribose 1-diphosphate. It functions in the pathway pyrimidine metabolism; UMP biosynthesis via de novo pathway; UMP from orotate: step 1/2. Catalyzes the transfer of a ribosyl phosphate group from 5-phosphoribose 1-diphosphate to orotate, leading to the formation of orotidine monophosphate (OMP). This is Orotate phosphoribosyltransferase from Chromobacterium violaceum (strain ATCC 12472 / DSM 30191 / JCM 1249 / CCUG 213 / NBRC 12614 / NCIMB 9131 / NCTC 9757 / MK).